Here is a 590-residue protein sequence, read N- to C-terminus: MGKRLDLSTLTDEEAEHVWAVVQRDFDLRRREEERLQGLKGKIQKESSKRELLSDTAHLNETHCARCLQPYRLLLNSRRQCLECSLFVCKSCSHAHPEEQGWLCDPCHLARVVKIGSLEWYYQHVRARFKRFGSAKVIRSLCGRLQGGGGSEPSLEEGNGDSEQTDEDGDLDTEARDQPLNSKKKKRLLSFRDVDFEEDSDHLVQPCSQTLGLSSVPESAHSLQSLSGEPYSEDTTSLEPEGLEETGARALGCRPSPEVQPCSPLPSGEDAHAELDSPAASCKSAFGTTAMPGTDDVRGKHLPSQYLADVDTSDEDSIQGPRAASQHSKRRARTVPETQILELNKRMSAVEHLLVHLENTVLPPSAQEPTVETHPSADTEEETLRRRLEELTSNISGSSTSSEDETKPDGTFLGGSPKVCTDTGHMETQERNPRSPGNPARPTKSTDEELSEMEDRVAMTASEVQQAESEISDIESRIAALRAAGLTVKPSGKPRRKSGIPIFLPRVTEKLDRIPKTPPADPDDQAKMPKATTAVPSLLRRKYSPSSQGVDSGSFDRKSVYRGSLTQRNPNGRRGTARHIFAKPVMAQQP.

The RabBD domain maps to 4–124 (RLDLSTLTDE…IGSLEWYYQH (121 aa)). The FYVE-type zinc finger occupies 64–107 (CARCLQPYRLLLNSRRQCLECSLFVCKSCSHAHPEEQGWLCDPC). Disordered stretches follow at residues 147–182 (GGGG…PLNS), 215–276 (SVPE…AELD), 311–335 (DTSD…ARTV), 361–472 (VLPP…SEIS), and 485–590 (GLTV…AQQP). The span at 154–172 (SLEEGNGDSEQTDEDGDLD) shows a compositional bias: acidic residues. Residues 215–238 (SVPESAHSLQSLSGEPYSEDTTSL) show a composition bias toward polar residues. Residues 339-485 (QILELNKRMS…SRIAALRAAG (147 aa)) are a coiled coil. Over residues 391-401 (LTSNISGSSTS) the composition is skewed to low complexity. Residues 424–433 (GHMETQERNP) show a composition bias toward basic and acidic residues.

Binds RAB27A that has been activated by GTP-binding via its N-terminus. Binds MYO5A via its C-terminal coiled coil domain. In terms of tissue distribution, highly expressed in embryos at day 7; not detectable at day 11. Highly expressed in adult stomach; detected at lower levels in kidney, lung, skin and small intestine. Detected in melanocytes.

It localises to the melanosome. Its function is as follows. Rab effector protein involved in melanosome transport. Serves as link between melanosome-bound RAB27A and the motor protein MYO5A. The polypeptide is Melanophilin (Mlph) (Mus musculus (Mouse)).